A 496-amino-acid polypeptide reads, in one-letter code: Maturase K (496 aa).

The protein belongs to the intron maturase 2 family. MatK subfamily.

The protein localises to the plastid. Its subcellular location is the chloroplast. Usually encoded in the trnK tRNA gene intron. Probably assists in splicing its own and other chloroplast group II introns. The chain is Maturase K from Paeonia lactiflora (Chinese peony).